Here is a 3966-residue protein sequence, read N- to C-terminus: Histone-lysine N-methyltransferase 2A (3966 aa).

Disordered stretches follow at residues M1–V106 and V130–I231. Positions R6 to R25 match the Menin-binding motif (MBM) motif. The span at T15–G29 shows a compositional bias: gly residues. The span at G75–A102 shows a compositional bias: low complexity. The Integrase domain-binding motif 1 (IBM1) signature appears at G121–G132. A phosphoserine; by CK2 mark is found at S134 and S140. An Integrase domain-binding motif 2 (IBM2) motif is present at residues Q145–G150. S151 is subject to Phosphoserine. A DNA-binding region (a.T hook 1) is located at residues K167–R178. Phosphoserine is present on S195. Residues S200–K218 show a composition bias toward basic and acidic residues. Positions S215–T225 form a DNA-binding region, a.T hook 2. N6-acetyllysine is present on K237. A DNA-binding region (a.T hook 3) is located at residues R299–T307. Residues L322–K343 are disordered. An N6-acetyllysine modification is found at K371. A disordered region spans residues R440–L590. Residues S450–Q489 show a composition bias toward low complexity. S516 is modified (phosphoserine). Low complexity predominate over residues L544–S557. Pro residues predominate over residues S558 to Q571. At K634 the chain carries N6-acetyllysine. Residue S678 is modified to Phosphoserine. 4 disordered regions span residues E711–A943, R963–I1003, I1034–R1064, and I1101–P1161. 2 stretches are compositionally biased toward low complexity: residues S717–S730 and L760–L790. Composition is skewed to polar residues over residues N791–E806 and Q817–P830. Position 837 is a phosphothreonine (T837). Residues E843–K887 are compositionally biased toward basic and acidic residues. Position 923 is a phosphoserine (S923). A compositionally biased stretch (low complexity) spans S989–I1003. The span at L1040 to S1059 shows a compositional bias: polar residues. S1053 bears the Phosphoserine mark. The segment covering I1101–S1111 has biased composition (basic and acidic residues). At K1127 the chain carries N6-acetyllysine. A CXXC-type zinc finger spans residues K1144–Q1192. Residues C1152, C1155, C1158, C1164, C1167, C1170, C1186, and C1191 each contribute to the Zn(2+) site. A disordered region spans residues W1196–Q1390. Positions S1217–T1229 are enriched in basic and acidic residues. A compositionally biased stretch (low complexity) spans A1230–A1241. At K1232 the chain carries N6-acetyllysine. Over residues P1245–E1270 the composition is skewed to basic and acidic residues. The segment covering K1369–Q1390 has biased composition (polar residues). PHD-type zinc fingers lie at residues R1430–C1481, C1478–C1532, and G1565–R1629. The interaction with histone H3K4me3 stretch occupies residues K1583–E1599. Positions A1637–V1767 constitute a Bromo domain. 2 disordered regions span residues Y1665–K1714 and W1807–D1870. Positions A1828 to P1849 are enriched in pro residues. Position 1839 is a phosphoserine (S1839). The residue at position 1847 (T1847) is a Phosphothreonine. A Phosphoserine modification is found at S1860. The C2HC pre-PHD-type zinc finger occupies N1872–V1912. The PHD-type 4 zinc-finger motif lies at L1933–R1980. Residues N2020–C2076 form the FYR N-terminal domain. Residue S2100 is modified to Phosphoserine. Positions R2147–H2174 are disordered. Position 2148 is a phosphothreonine (T2148). S2152 and S2202 each carry phosphoserine. 4 disordered regions span residues V2214–G2339, R2371–A2619, E2639–D2673, and K2709–E2759. Over residues S2218–S2230 the composition is skewed to low complexity. Polar residues-rich tracts occupy residues L2250–S2284 and T2308–S2320. Composition is skewed to basic and acidic residues over residues I2411–D2422 and S2430–S2440. A compositionally biased stretch (polar residues) spans G2498–E2509. K2524 is covalently cross-linked (Glycyl lysine isopeptide (Lys-Gly) (interchain with G-Cter in SUMO2)). Residues E2528–E2537 show a composition bias toward polar residues. A Phosphoserine modification is found at S2560. The span at P2569–P2588 shows a compositional bias: polar residues. A Phosphoserine modification is found at S2607. A compositionally biased stretch (basic residues) spans K2609–R2618. A compositionally biased stretch (acidic residues) spans G2663 to D2673. The span at S2722–P2737 shows a compositional bias: polar residues. A compositionally biased stretch (basic and acidic residues) spans N2740–E2759. S2792 carries the post-translational modification Phosphoserine. The short motif at S2843–K2851 is the 9aaTAD element. A Phosphoserine modification is found at S2951. The residue at position 2954 (K2954) is an N6-acetyllysine. Disordered stretches follow at residues I2958–V3060 and A3164–I3239. A compositionally biased stretch (polar residues) spans H3012 to P3025. S3032 bears the Phosphoserine mark. The segment covering V3035–V3060 has biased composition (polar residues). Positions S3167 to S3178 are enriched in low complexity. Positions E3196–S3212 are enriched in polar residues. The span at L3214 to K3229 shows a compositional bias: basic residues. T3369 is subject to Phosphothreonine. An N6-acetyllysine modification is found at K3459. The disordered stretch occupies residues T3462 to S3640. Polar residues predominate over residues P3475 to E3487. Positions P3501–G3528 are enriched in low complexity. 2 positions are modified to phosphoserine: S3510 and S3523. Positions T3558–D3570 are enriched in basic and acidic residues. An FYR C-terminal domain is found at K3663–F3744. The WDR5 interaction motif (WIN) motif lies at G3759–E3764. The tract at residues H3782 to R3805 is disordered. The SET domain occupies E3826 to K3942. S-adenosyl-L-methionine-binding residues include H3836 and R3838. At C3879 the chain carries S-methylcysteine; by autocatalysis. S-adenosyl-L-methionine is bound by residues Y3880 and N3903–H3904. Residues C3906 and C3954 each coordinate Zn(2+). The Post-SET domain maps to N3950–N3966. N3955 contacts S-adenosyl-L-methionine. Zn(2+)-binding residues include C3956 and C3961.

It belongs to the class V-like SAM-binding methyltransferase superfamily. Histone-lysine methyltransferase family. TRX/MLL subfamily. In terms of assembly, MLL cleavage product N320 heterodimerizes with MLL cleavage product C180 (via SET and FYRC domains). Component of some MLL1/MLL complex, at least composed of the core components KMT2A/MLL1, ASH2L, HCFC1/HCF1, HCFC2, WDR5, DPY30 and RBBP5, as well as the facultative components BACC1, CHD8, E2F6, HSP70, INO80C, KANSL1, LAS1L, MAX, MCRS1, MEN1, MGA, KAT8/MOF, PELP1, PHF20, PRP31, RING2, RUVB1/TIP49A, RUVB2/TIP49B, SENP3, TAF1, TAF4, TAF6, TAF7, TAF9 and TEX10. Interacts (via WIN motif) with WDR5; the interaction is direct. Interaction with WDR5 is required for stable interaction with ASH2L and RBBP5, and thereby also for optimal histone methyltransferase activity. Interacts with KAT8/MOF; the interaction is direct. Interacts with SBF1 and PPP1R15A. Interacts with ZNF335. Interacts with CLOCK and BMAL1 in a circadian manner. Interacts with PPIE; this results in decreased histone H3 methyltransferase activity. Interacts with CREBBP. Interacts with the WRAD complex composed of WDR5, RBBP5, ASH2L and DPY30. Interacts (via MBM motif) with MEN1. Interacts (via IBM motifs) with PSIP1 (via IBD domain) with moderate affinity whereas the KMT2A-MEN1 complex interacts with a greater affinity; MEN1 enhances interaction of KMT2A with PSIP1. Phosphorylation increases its affinity for PSIP1. Forms a complex with CREBBP and CREB1. In terms of processing, proteolytic cleavage by TASP1 generates MLL cleavage 3product N320 and MLL cleavage product C180, which reassemble through a non-covalent association. 2 cleavage sites exist, cleavage site 1 (CS1) and cleavage site 2 (CS2), to generate MLL cleavage products N320 and C180. CS2 is the major site. Post-translationally, phosphorylation increases its interaction with PSIP1. Auto-methylated at Cys-3879: auto-methylation is inhibited by the WRAD complex and unmodified histone H3.

Its subcellular location is the nucleus. It carries out the reaction L-lysyl(4)-[histone H3] + S-adenosyl-L-methionine = N(6)-methyl-L-lysyl(4)-[histone H3] + S-adenosyl-L-homocysteine + H(+). The enzyme catalyses N(6)-methyl-L-lysyl(4)-[histone H3] + S-adenosyl-L-methionine = N(6),N(6)-dimethyl-L-lysyl(4)-[histone H3] + S-adenosyl-L-homocysteine + H(+). It catalyses the reaction L-cysteinyl-[protein] + S-adenosyl-L-methionine = S-methyl-L-cysteinyl-[protein] + S-adenosyl-L-homocysteine + H(+). Histone methyltransferase that plays an essential role in early development and hematopoiesis. Catalytic subunit of the MLL1/MLL complex, a multiprotein complex that mediates both methylation of 'Lys-4' of histone H3 (H3K4me) complex and acetylation of 'Lys-16' of histone H4 (H4K16ac). Catalyzes methyl group transfer from S-adenosyl-L-methionine to the epsilon-amino group of 'Lys-4' of histone H3 (H3K4) via a non-processive mechanism. Part of chromatin remodeling machinery predominantly forms H3K4me1 and H3K4me2 methylation marks at active chromatin sites where transcription and DNA repair take place. Has weak methyltransferase activity by itself, and requires other component of the MLL1/MLL complex to obtain full methyltransferase activity. Has no activity toward histone H3 phosphorylated on 'Thr-3', less activity toward H3 dimethylated on 'Arg-8' or 'Lys-9', while it has higher activity toward H3 acetylated on 'Lys-9'. Binds to unmethylated CpG elements in the promoter of target genes and helps maintain them in the nonmethylated state. Required for transcriptional activation of HOXA9. Promotes PPP1R15A-induced apoptosis. Plays a critical role in the control of circadian gene expression and is essential for the transcriptional activation mediated by the CLOCK-BMAL1 heterodimer. Establishes a permissive chromatin state for circadian transcription by mediating a rhythmic methylation of 'Lys-4' of histone H3 (H3K4me) and this histone modification directs the circadian acetylation at H3K9 and H3K14 allowing the recruitment of CLOCK-BMAL1 to chromatin. Also has auto-methylation activity on Cys-3879 in absence of histone H3 substrate. The sequence is that of Histone-lysine N-methyltransferase 2A (Kmt2a) from Mus musculus (Mouse).